A 374-amino-acid polypeptide reads, in one-letter code: Alpha-galactosylglucosyldiacylglycerol synthase (374 aa).

Belongs to the glycosyltransferase group 1 family. Glycosyltransferase 4 subfamily. Requires Mg(2+) as cofactor.

Its subcellular location is the cell membrane. The catalysed reaction is a 1,2-diacyl-3-O-(alpha-D-glucopyranosyl)-sn-glycerol + UDP-alpha-D-galactose = a 1,2-diacyl-3-O-[alpha-D-galactopyranosyl-(1-&gt;2)-alpha-D-glucopyranosyl]-sn-glycerol + UDP + H(+). Its activity is regulated as follows. Activated by the negatively charged lipid phosphatidylglycerol (PG). Galactosyltransferase involved in the biosynthesis of the bilayer-forming membrane lipid alpha-galactosyl-glucosyldiacylglycerol which is involved in maintaining constant nonbilayer/bilayer conditions (curvature packing stress). Also involved in the beta-lactam resistance. Catalyzes the transfer of a galactosyl residue from UDP-Gal to alpha-glucosyl-DAG (1,2-diacyl-3-O-(alpha-D-glucopyranosyl)-sn-glycerol) acceptor to form the corresponding galactosyl-glycosyl-DAG product (3-O-alpha-(D-galactopyranosyl-alpha-(1-&gt;2)-D-glucopyranosyl)-1,2-diacyl-sn-glycerol). It can only use UDP-Gal as sugar donor and alpha-glucosyl-DAG is the preferred sugar acceptor. This is Alpha-galactosylglucosyldiacylglycerol synthase (cpoA) from Streptococcus pneumoniae (strain ATCC BAA-255 / R6).